The chain runs to 79 residues: Small ribosomal subunit protein bS16 (79 aa).

Belongs to the bacterial ribosomal protein bS16 family.

This is Small ribosomal subunit protein bS16 from Nitratidesulfovibrio vulgaris (strain ATCC 29579 / DSM 644 / CCUG 34227 / NCIMB 8303 / VKM B-1760 / Hildenborough) (Desulfovibrio vulgaris).